Here is a 365-residue protein sequence, read N- to C-terminus: MINLGDKQSTIVVAMSGGVDSSAVAAMLHEQGHNVIGITLQLYDHGMAVGKKNACCAGQDIYDAKMVANKLGIPHYVLDYESKFKESVIDNFVDSYLQGETPLPCVQCNKSVKFRDLIKTARELGADKLATGHYVRKINGDNGAELHTGLDPAKDQSYFLFTTTKEQLEYLRFPLGGLTKDETRKLASKFGLEVADKPDSQDICFIPDGNYKSVINKIRPNSSESGKIIHVNGFELGEHSGIINYTIGQRRGLGIAYNEPLYVVKIDPKDNVVYVGPESALNVQEFIIRDVNWLADEIKDNEKLEVAVKIRSTRPPRLAEISKFGDDKMKVKFLCEEKAVAPGQACVIYAGARVLGGGWITREIR.

ATP-binding positions include 14–21 and Leu40; that span reads AMSGGVDS. Cys108 acts as the Nucleophile in catalysis. Cys108 and Cys204 are joined by a disulfide. Gly132 is an ATP binding site. The interaction with tRNA stretch occupies residues 154 to 156; that stretch reads KDQ. Catalysis depends on Cys204, which acts as the Cysteine persulfide intermediate.

It belongs to the MnmA/TRMU family.

The protein resides in the cytoplasm. The catalysed reaction is S-sulfanyl-L-cysteinyl-[protein] + uridine(34) in tRNA + AH2 + ATP = 2-thiouridine(34) in tRNA + L-cysteinyl-[protein] + A + AMP + diphosphate + H(+). Catalyzes the 2-thiolation of uridine at the wobble position (U34) of tRNA, leading to the formation of s(2)U34. This chain is tRNA-specific 2-thiouridylase MnmA, found in Rickettsia africae (strain ESF-5).